Here is a 491-residue protein sequence, read N- to C-terminus: Aspartyl/glutamyl-tRNA(Asn/Gln) amidotransferase subunit B (491 aa).

The protein belongs to the GatB/GatE family. GatB subfamily. Heterotrimer of A, B and C subunits.

The enzyme catalyses L-glutamyl-tRNA(Gln) + L-glutamine + ATP + H2O = L-glutaminyl-tRNA(Gln) + L-glutamate + ADP + phosphate + H(+). It carries out the reaction L-aspartyl-tRNA(Asn) + L-glutamine + ATP + H2O = L-asparaginyl-tRNA(Asn) + L-glutamate + ADP + phosphate + 2 H(+). In terms of biological role, allows the formation of correctly charged Asn-tRNA(Asn) or Gln-tRNA(Gln) through the transamidation of misacylated Asp-tRNA(Asn) or Glu-tRNA(Gln) in organisms which lack either or both of asparaginyl-tRNA or glutaminyl-tRNA synthetases. The reaction takes place in the presence of glutamine and ATP through an activated phospho-Asp-tRNA(Asn) or phospho-Glu-tRNA(Gln). This is Aspartyl/glutamyl-tRNA(Asn/Gln) amidotransferase subunit B from Trichormus variabilis (strain ATCC 29413 / PCC 7937) (Anabaena variabilis).